The following is a 155-amino-acid chain: MNPIRKKRLYWILALLCGVSIAMALALSALQENINLFYTPSQIVAGEAPQGTRIRAGGMVENGSLMRTQDSLALRFSVTDGAHNITVRYQGILPDLFREGQGIVAMGKLDRNGSLIADEVLAKHDENYMPPEVIHALKQAGVLDNPKRVKQESTR.

The Cytoplasmic portion of the chain corresponds to 1-8 (MNPIRKKR). Residues 9 to 29 (LYWILALLCGVSIAMALALSA) form a helical; Signal-anchor for type II membrane protein membrane-spanning segment. At 30-155 (LQENINLFYT…PKRVKQESTR (126 aa)) the chain is on the periplasmic side. Heme-binding residues include H124 and Y128.

Belongs to the CcmE/CycJ family.

It is found in the cell inner membrane. Its function is as follows. Heme chaperone required for the biogenesis of c-type cytochromes. Transiently binds heme delivered by CcmC and transfers the heme to apo-cytochromes in a process facilitated by CcmF and CcmH. The chain is Cytochrome c-type biogenesis protein CcmE from Janthinobacterium sp. (strain Marseille) (Minibacterium massiliensis).